A 361-amino-acid polypeptide reads, in one-letter code: Phospho-N-acetylmuramoyl-pentapeptide-transferase (361 aa).

A run of 10 helical transmembrane segments spans residues 28 to 48, 74 to 94, 99 to 119, 133 to 153, 168 to 188, 203 to 223, 236 to 256, 263 to 283, 288 to 308, and 338 to 358; these read LAII…IKFL, TMGG…LADL, IWIT…DDYA, SKLV…EYLD, LNLD…VGSS, VPIA…GNLI, TGEL…FLWF, VFMG…ISVI, IVLA…ILQV, and KVVI…LSSL.

It belongs to the glycosyltransferase 4 family. MraY subfamily. Requires Mg(2+) as cofactor.

The protein localises to the cell inner membrane. It carries out the reaction UDP-N-acetyl-alpha-D-muramoyl-L-alanyl-gamma-D-glutamyl-meso-2,6-diaminopimeloyl-D-alanyl-D-alanine + di-trans,octa-cis-undecaprenyl phosphate = di-trans,octa-cis-undecaprenyl diphospho-N-acetyl-alpha-D-muramoyl-L-alanyl-D-glutamyl-meso-2,6-diaminopimeloyl-D-alanyl-D-alanine + UMP. The protein operates within cell wall biogenesis; peptidoglycan biosynthesis. Catalyzes the initial step of the lipid cycle reactions in the biosynthesis of the cell wall peptidoglycan: transfers peptidoglycan precursor phospho-MurNAc-pentapeptide from UDP-MurNAc-pentapeptide onto the lipid carrier undecaprenyl phosphate, yielding undecaprenyl-pyrophosphoryl-MurNAc-pentapeptide, known as lipid I. The polypeptide is Phospho-N-acetylmuramoyl-pentapeptide-transferase (Rickettsia akari (strain Hartford)).